Reading from the N-terminus, the 86-residue chain is NAD(P)H-quinone oxidoreductase subunit O (86 aa).

This sequence belongs to the complex I NdhO subunit family. As to quaternary structure, NDH-1 can be composed of about 15 different subunits; different subcomplexes with different compositions have been identified which probably have different functions.

Its subcellular location is the cellular thylakoid membrane. The catalysed reaction is a plastoquinone + NADH + (n+1) H(+)(in) = a plastoquinol + NAD(+) + n H(+)(out). It carries out the reaction a plastoquinone + NADPH + (n+1) H(+)(in) = a plastoquinol + NADP(+) + n H(+)(out). In terms of biological role, NDH-1 shuttles electrons from an unknown electron donor, via FMN and iron-sulfur (Fe-S) centers, to quinones in the respiratory and/or the photosynthetic chain. The immediate electron acceptor for the enzyme in this species is believed to be plastoquinone. Couples the redox reaction to proton translocation, and thus conserves the redox energy in a proton gradient. Cyanobacterial NDH-1 also plays a role in inorganic carbon-concentration. This Prochlorococcus marinus (strain SARG / CCMP1375 / SS120) protein is NAD(P)H-quinone oxidoreductase subunit O.